The chain runs to 212 residues: 3-isopropylmalate dehydratase small subunit (212 aa).

Belongs to the LeuD family. LeuD type 1 subfamily. In terms of assembly, heterodimer of LeuC and LeuD.

It carries out the reaction (2R,3S)-3-isopropylmalate = (2S)-2-isopropylmalate. Its pathway is amino-acid biosynthesis; L-leucine biosynthesis; L-leucine from 3-methyl-2-oxobutanoate: step 2/4. In terms of biological role, catalyzes the isomerization between 2-isopropylmalate and 3-isopropylmalate, via the formation of 2-isopropylmaleate. This is 3-isopropylmalate dehydratase small subunit from Nitrosomonas eutropha (strain DSM 101675 / C91 / Nm57).